A 129-amino-acid polypeptide reads, in one-letter code: Lysozyme C (129 aa).

The region spanning 1–129 (KVYGRCELAA…VNAWIRGCRL (129 aa)) is the C-type lysozyme domain. Disulfide bonds link cysteine 6–cysteine 127, cysteine 30–cysteine 115, cysteine 64–cysteine 80, and cysteine 76–cysteine 94. Active-site residues include glutamate 35 and aspartate 52.

The protein belongs to the glycosyl hydrolase 22 family. Monomer.

The protein resides in the secreted. The catalysed reaction is Hydrolysis of (1-&gt;4)-beta-linkages between N-acetylmuramic acid and N-acetyl-D-glucosamine residues in a peptidoglycan and between N-acetyl-D-glucosamine residues in chitodextrins.. Lysozymes have primarily a bacteriolytic function; those in tissues and body fluids are associated with the monocyte-macrophage system and enhance the activity of immunoagents. The polypeptide is Lysozyme C (LYZ) (Syrmaticus reevesii (Reeves's pheasant)).